The primary structure comprises 848 residues: Trimethylamine-N-oxide reductase 1 (848 aa).

A signal peptide (tat-type signal) is located at residues 1-39 (MNNNDLFQASRRRFLAQLGGLTVAGMLGTSLLTPRRATA). Serine 191 is a binding site for Mo-bis(molybdopterin guanine dinucleotide).

This sequence belongs to the prokaryotic molybdopterin-containing oxidoreductase family. Requires Mo-bis(molybdopterin guanine dinucleotide) as cofactor. Predicted to be exported by the Tat system. The position of the signal peptide cleavage has not been experimentally proven.

It localises to the periplasm. It carries out the reaction trimethylamine + 2 Fe(III)-[cytochrome c] + H2O = trimethylamine N-oxide + 2 Fe(II)-[cytochrome c] + 3 H(+). Reduces trimethylamine-N-oxide (TMAO) into trimethylamine; an anaerobic reaction coupled to energy-yielding reactions. The chain is Trimethylamine-N-oxide reductase 1 (torA) from Escherichia coli O6:H1 (strain CFT073 / ATCC 700928 / UPEC).